Here is an 874-residue protein sequence, read N- to C-terminus: Alanine--tRNA ligase (874 aa).

Residues histidine 562, histidine 566, cysteine 664, and histidine 668 each contribute to the Zn(2+) site.

It belongs to the class-II aminoacyl-tRNA synthetase family. It depends on Zn(2+) as a cofactor.

It is found in the cytoplasm. The catalysed reaction is tRNA(Ala) + L-alanine + ATP = L-alanyl-tRNA(Ala) + AMP + diphosphate. Catalyzes the attachment of alanine to tRNA(Ala) in a two-step reaction: alanine is first activated by ATP to form Ala-AMP and then transferred to the acceptor end of tRNA(Ala). Also edits incorrectly charged Ser-tRNA(Ala) and Gly-tRNA(Ala) via its editing domain. The polypeptide is Alanine--tRNA ligase (Shewanella loihica (strain ATCC BAA-1088 / PV-4)).